The chain runs to 1005 residues: Myosin IE heavy chain (1005 aa).

In terms of domain architecture, Myosin motor spans 8 to 693; that stretch reads EGVPDFVLLN…TLFYFEEKRE (686 aa). Residue 101–108 participates in ATP binding; that stretch reads GESGAGKT. A disordered region spans residues 539-562; sequence SDPLVQGLFPPTRPEDSKKRPETA. Over residues 551-560 the composition is skewed to basic and acidic residues; the sequence is RPEDSKKRPE. The interval 556–630 is actin-binding; sequence KKRPETAGSQ…RAGFAGRIEY (75 aa). IQ domains follow at residues 694-722 and 716-745; these read LEMPRIVTLIQKTWRGYRARSKWNQRKAA and WNQRKAAIKIQLFYRSYRYKKWFRELHRAF. Residues 810–1004 enclose the TH1 domain; the sequence is KKKWDFRRHF…KGNQATIQFK (195 aa).

Belongs to the TRAFAC class myosin-kinesin ATPase superfamily. Myosin family. Myosin I heavy chain is single-headed. Dimer of a heavy and a light chain. Inability to self-assemble into filaments.

Functionally, myosin is a protein that binds to actin and has ATPase activity that is activated by actin. May play a role in moving membranes relative to actin. This is Myosin IE heavy chain (myoE) from Dictyostelium discoideum (Social amoeba).